We begin with the raw amino-acid sequence, 133 residues long: DNA-directed RNA polymerases I and III subunit RPAC2 (133 aa).

The residue at position 1 (methionine 1) is an N-acetylmethionine.

The protein belongs to the archaeal Rpo11/eukaryotic RPB11/RPC19 RNA polymerase subunit family. In terms of assembly, component of the RNA polymerase I and RNA polymerase III complexes consisting of at least 13 and 17 subunits, respectively. Pol I complex consists of a ten-subunit catalytic core composed of POLR1A/RPA1, POLR1B/RPA2, POLR1C/RPAC1, POLR1D/RPAC2, POLR1H/RPA12, POLR2E/RPABC1, POLR2F/RPABC2, POLR2H/RPABC3, POLR2K/RPABC4 and POLR2L/RPABC5; a mobile stalk subunit POLR1F/RPA43 protruding from the core and additional subunits homologous to general transcription factors POLR1E/RPA49 and POLR1G/RPA34. Part of Pol I pre-initiation complex (PIC), in which Pol I core assembles with RRN3 and promoter-bound UTBF and SL1/TIF-IB complex. Pol III complex consists of a ten-subunit catalytic core composed of POLR3A/RPC1, POLR3B/RPC2, POLR1C/RPAC1, POLR1D/RPAC2, POLR3K/RPC10, POLR2E/RPABC1, POLR2F/RPABC2, POLR2H/RPABC3, POLR2K/RPABC4 and POLR2L/RPABC5; a mobile stalk composed of two subunits POLR3H/RPC8 and CRCP/RPC9, protruding from the core and functioning primarily in transcription initiation; and additional subunits homologous to general transcription factors of the RNA polymerase II machinery, POLR3C/RPC3-POLR3F/RPC6-POLR3G/RPC7 heterotrimer required for transcription initiation and POLR3D/RPC4-POLR3E/RPC5 heterodimer involved in both transcription initiation and termination.

It localises to the nucleus. The protein resides in the nucleolus. DNA-dependent RNA polymerase catalyzes the transcription of DNA into RNA using the four ribonucleoside triphosphates as substrates. Common component of RNA polymerases I and III which synthesize ribosomal RNA precursors and short non-coding RNAs including 5S rRNA, snRNAs, tRNAs and miRNAs, respectively. The protein is DNA-directed RNA polymerases I and III subunit RPAC2 of Homo sapiens (Human).